We begin with the raw amino-acid sequence, 264 residues long: Thymidylate synthase (264 aa).

DUMP is bound at residue arginine 21. Position 51 (histidine 51) interacts with (6R)-5,10-methylene-5,6,7,8-tetrahydrofolate. DUMP is bound at residue 126–127 (RR). Residue cysteine 146 is the Nucleophile of the active site. Residues 166–169 (RSCD), asparagine 177, and 207–209 (HLY) contribute to the dUMP site. Aspartate 169 lines the (6R)-5,10-methylene-5,6,7,8-tetrahydrofolate pocket. Residue serine 263 participates in (6R)-5,10-methylene-5,6,7,8-tetrahydrofolate binding.

The protein belongs to the thymidylate synthase family. Bacterial-type ThyA subfamily. Homodimer.

The protein resides in the cytoplasm. It carries out the reaction dUMP + (6R)-5,10-methylene-5,6,7,8-tetrahydrofolate = 7,8-dihydrofolate + dTMP. The protein operates within pyrimidine metabolism; dTTP biosynthesis. In terms of biological role, catalyzes the reductive methylation of 2'-deoxyuridine-5'-monophosphate (dUMP) to 2'-deoxythymidine-5'-monophosphate (dTMP) while utilizing 5,10-methylenetetrahydrofolate (mTHF) as the methyl donor and reductant in the reaction, yielding dihydrofolate (DHF) as a by-product. This enzymatic reaction provides an intracellular de novo source of dTMP, an essential precursor for DNA biosynthesis. The protein is Thymidylate synthase of Buchnera aphidicola subsp. Schizaphis graminum (strain Sg).